We begin with the raw amino-acid sequence, 468 residues long: Glutamate--tRNA ligase 2 (468 aa).

The 'HIGH' region signature appears at 9–19; sequence PSPTGFLHIGG. The short motif at 238–242 is the 'KMSKS' region element; it reads KLSKR. K241 contributes to the ATP binding site.

This sequence belongs to the class-I aminoacyl-tRNA synthetase family. Glutamate--tRNA ligase type 1 subfamily. In terms of assembly, monomer.

It localises to the cytoplasm. The enzyme catalyses tRNA(Glu) + L-glutamate + ATP = L-glutamyl-tRNA(Glu) + AMP + diphosphate. Functionally, catalyzes the attachment of glutamate to tRNA(Glu) in a two-step reaction: glutamate is first activated by ATP to form Glu-AMP and then transferred to the acceptor end of tRNA(Glu). This Rhodospirillum centenum (strain ATCC 51521 / SW) protein is Glutamate--tRNA ligase 2.